The sequence spans 217 residues: Deoxyribose-phosphate aldolase (217 aa).

Asp-95 (proton donor/acceptor) is an active-site residue. Lys-156 functions as the Schiff-base intermediate with acetaldehyde in the catalytic mechanism. The active-site Proton donor/acceptor is the Lys-184.

It belongs to the DeoC/FbaB aldolase family. DeoC type 1 subfamily.

The protein resides in the cytoplasm. The enzyme catalyses 2-deoxy-D-ribose 5-phosphate = D-glyceraldehyde 3-phosphate + acetaldehyde. It participates in carbohydrate degradation; 2-deoxy-D-ribose 1-phosphate degradation; D-glyceraldehyde 3-phosphate and acetaldehyde from 2-deoxy-alpha-D-ribose 1-phosphate: step 2/2. In terms of biological role, catalyzes a reversible aldol reaction between acetaldehyde and D-glyceraldehyde 3-phosphate to generate 2-deoxy-D-ribose 5-phosphate. This chain is Deoxyribose-phosphate aldolase, found in Thermosynechococcus vestitus (strain NIES-2133 / IAM M-273 / BP-1).